The primary structure comprises 277 residues: NH(3)-dependent NAD(+) synthetase (277 aa).

An ATP-binding site is contributed by 46–53 (GISGGQDS). Mg(2+) is bound at residue Asp52. Arg142 lines the deamido-NAD(+) pocket. Thr162 contacts ATP. Residue Glu167 participates in Mg(2+) binding. Deamido-NAD(+) contacts are provided by Lys175 and Asp182. Residues Lys191 and Thr213 each contribute to the ATP site. 263 to 264 (HK) serves as a coordination point for deamido-NAD(+).

It belongs to the NAD synthetase family. In terms of assembly, homodimer.

The enzyme catalyses deamido-NAD(+) + NH4(+) + ATP = AMP + diphosphate + NAD(+) + H(+). It functions in the pathway cofactor biosynthesis; NAD(+) biosynthesis; NAD(+) from deamido-NAD(+) (ammonia route): step 1/1. Functionally, catalyzes the ATP-dependent amidation of deamido-NAD to form NAD. Uses ammonia as a nitrogen source. In Corynebacterium glutamicum (strain ATCC 13032 / DSM 20300 / JCM 1318 / BCRC 11384 / CCUG 27702 / LMG 3730 / NBRC 12168 / NCIMB 10025 / NRRL B-2784 / 534), this protein is NH(3)-dependent NAD(+) synthetase.